Here is a 702-residue protein sequence, read N- to C-terminus: Ribosomal RNA large subunit methyltransferase K/L (702 aa).

The THUMP domain occupies leucine 43–leucine 154.

This sequence belongs to the methyltransferase superfamily. RlmKL family.

It is found in the cytoplasm. The enzyme catalyses guanosine(2445) in 23S rRNA + S-adenosyl-L-methionine = N(2)-methylguanosine(2445) in 23S rRNA + S-adenosyl-L-homocysteine + H(+). The catalysed reaction is guanosine(2069) in 23S rRNA + S-adenosyl-L-methionine = N(2)-methylguanosine(2069) in 23S rRNA + S-adenosyl-L-homocysteine + H(+). Specifically methylates the guanine in position 2445 (m2G2445) and the guanine in position 2069 (m7G2069) of 23S rRNA. The sequence is that of Ribosomal RNA large subunit methyltransferase K/L from Escherichia coli O1:K1 / APEC.